A 37-amino-acid polypeptide reads, in one-letter code: Large ribosomal subunit protein bL36 (37 aa).

Belongs to the bacterial ribosomal protein bL36 family.

The protein is Large ribosomal subunit protein bL36 of Metamycoplasma arthritidis (strain 158L3-1) (Mycoplasma arthritidis).